A 109-amino-acid chain; its full sequence is Aquaporin-2 (109 aa).

At 1–6 (SVAFSR) the chain is on the cytoplasmic side. A helical membrane pass occupies residues 7-27 (AVFAEFLATLLFVFFGLGSAL). The Extracellular portion of the chain corresponds to 28 to 35 (NWPQALPS). Residues 36 to 54 (VLQIAMAFGLGIGTLVQAL) traverse the membrane as a helical segment. Residues 55 to 59 (GHVSG) are Cytoplasmic-facing. The segment at residues 60-69 (AHINPAVTVA) is an intramembrane region (discontinuously helical). An NPA 1 motif is present at residues 63-65 (NPA). The Cytoplasmic portion of the chain corresponds to 70–80 (CLVGCHVSFLR). The helical transmembrane segment at 81–102 (AAFYVAAQLLGAVAGAALLHEI) threads the bilayer. The Extracellular segment spans residues 103–109 (TPPHVRG).

It belongs to the MIP/aquaporin (TC 1.A.8) family. In terms of assembly, homotetramer. Serine phosphorylation is necessary and sufficient for expression at the apical membrane. Endocytosis is not phosphorylation-dependent. In terms of processing, N-glycosylated.

It localises to the apical cell membrane. The protein resides in the basolateral cell membrane. It is found in the cell membrane. The protein localises to the cytoplasmic vesicle membrane. Its subcellular location is the golgi apparatus. It localises to the trans-Golgi network membrane. The enzyme catalyses H2O(in) = H2O(out). It carries out the reaction glycerol(in) = glycerol(out). Forms a water-specific channel that provides the plasma membranes of renal collecting duct with high permeability to water, thereby permitting water to move in the direction of an osmotic gradient. Plays an essential role in renal water homeostasis. Could also be permeable to glycerol. This chain is Aquaporin-2, found in Canis lupus familiaris (Dog).